A 140-amino-acid polypeptide reads, in one-letter code: Auxin-responsive protein IAA26 (140 aa).

Residues methionine 1 to serine 40 are disordered. Residues leucine 14–proline 18 carry the EAR-like (transcriptional repression) motif. Basic residues predominate over residues arginine 24–glycine 33. The region spanning alanine 45–alanine 130 is the PB1 domain.

The protein belongs to the Aux/IAA family. Homodimers and heterodimers. In terms of tissue distribution, expressed in roots, seedlings and flowers.

The protein localises to the nucleus. Its function is as follows. Aux/IAA proteins are short-lived transcriptional factors that function as repressors of early auxin response genes at low auxin concentrations. The chain is Auxin-responsive protein IAA26 (IAA26) from Oryza sativa subsp. japonica (Rice).